A 153-amino-acid chain; its full sequence is MADFHLIAPKGANRARRIVGRGSSSGRGTTSGRGTKGQQARAGHKAYVGFEGGQMPLYRRVPRRGFSNCAFKKEYAVVNVGALEFVYAPGETVNRQTLIEKGLVKGRVPFIKILADGELTKSIVVRVDRVSARAQEKIQQAGGSVECIEAQER.

Positions 15-42 (ARRIVGRGSSSGRGTTSGRGTKGQQARA) are disordered. A compositionally biased stretch (gly residues) spans 23-35 (SSSGRGTTSGRGT).

It belongs to the universal ribosomal protein uL15 family. As to quaternary structure, part of the 50S ribosomal subunit.

In terms of biological role, binds to the 23S rRNA. This is Large ribosomal subunit protein uL15 from Treponema pallidum (strain Nichols).